The following is a 238-amino-acid chain: Ribonuclease PH (238 aa).

Residues arginine 86 and 124–126 (GTR) each bind phosphate.

Belongs to the RNase PH family. In terms of assembly, homohexameric ring arranged as a trimer of dimers.

The catalysed reaction is tRNA(n+1) + phosphate = tRNA(n) + a ribonucleoside 5'-diphosphate. In terms of biological role, phosphorolytic 3'-5' exoribonuclease that plays an important role in tRNA 3'-end maturation. Removes nucleotide residues following the 3'-CCA terminus of tRNAs; can also add nucleotides to the ends of RNA molecules by using nucleoside diphosphates as substrates, but this may not be physiologically important. Probably plays a role in initiation of 16S rRNA degradation (leading to ribosome degradation) during starvation. This is Ribonuclease PH from Actinobacillus pleuropneumoniae serotype 5b (strain L20).